We begin with the raw amino-acid sequence, 29 residues long: Kappa-sparatoxin-Hv1e (29 aa).

3 disulfides stabilise this stretch: Cys3–Cys17, Cys10–Cys22, and Cys16–Cys26.

Expressed by the venom gland.

It localises to the secreted. Functionally, inhibitor of voltage-gated potassium channels of the Kv4/KCND family. Blocks calcium channels (Cav). The sequence is that of Kappa-sparatoxin-Hv1e from Heteropoda venatoria (Brown huntsman spider).